The chain runs to 478 residues: Putative multidrug resistance outer membrane protein MdtQ (478 aa).

The signal sequence occupies residues 1–21 (MNRDSFYPAIACFPLLLMLAG). C22 is lipidated: N-palmitoyl cysteine. C22 is lipidated: S-diacylglycerol cysteine.

It belongs to the outer membrane factor (OMF) (TC 1.B.17) family.

The protein localises to the cell outer membrane. In terms of biological role, could be involved in resistance to puromycin, acriflavine and tetraphenylarsonium chloride. This chain is Putative multidrug resistance outer membrane protein MdtQ (mdtQ), found in Escherichia coli (strain K12).